Consider the following 267-residue polypeptide: NAD kinase (267 aa).

The Proton acceptor role is filled by Asp-45. NAD(+)-binding positions include 45-46, 123-124, Arg-149, Asp-151, Ala-186, and Asn-226; these read DG and NE.

Belongs to the NAD kinase family. A divalent metal cation is required as a cofactor.

It localises to the cytoplasm. The enzyme catalyses NAD(+) + ATP = ADP + NADP(+) + H(+). Its function is as follows. Involved in the regulation of the intracellular balance of NAD and NADP, and is a key enzyme in the biosynthesis of NADP. Catalyzes specifically the phosphorylation on 2'-hydroxyl of the adenosine moiety of NAD to yield NADP. The protein is NAD kinase of Shouchella clausii (strain KSM-K16) (Alkalihalobacillus clausii).